The following is a 612-amino-acid chain: Indole-3-acetic acid-amido synthetase GH3.6 (612 aa).

It belongs to the IAA-amido conjugating enzyme family. As to expression, expressed in cotyledons, stipules, true leaves, hypocotyls, and all parts of the roots. Not detected in flowers.

Its function is as follows. Catalyzes the synthesis of indole-3-acetic acid (IAA)-amino acid conjugates, providing a mechanism for the plant to cope with the presence of excess auxin. Strongly reactive with Glu, Gln, Trp, Asp, Ala, Leu, Phe, Gly, Tyr, Met, Ile and Val. Little or no product formation with His, Ser, Thr, Arg, Lys, or Cys. Also active on pyruvic and butyric acid analogs of IAA, PAA and the synthetic auxin naphthaleneacetic acid (NAA). The two chlorinated synthetic auxin herbicides 2,4-D and 3,6-dichloro-o-anisic acid (dicamba) cannot be used as substrates. Involved in auxin signal transduction. Inhibits shoot and hypocotyl cell elongation, and lateral root cell differentiation in light. The polypeptide is Indole-3-acetic acid-amido synthetase GH3.6 (GH3.6) (Arabidopsis thaliana (Mouse-ear cress)).